We begin with the raw amino-acid sequence, 710 residues long: Ferrioxamine receptor (710 aa).

The first 26 residues, 1–26 (MFSAFIIKRSAILCSLAMFIPLASIA), serve as a signal peptide directing secretion. A TonB box motif is present at residues 28 to 35 (DTIEVTAK). Transmembrane regions (beta stranded) follow at residues 29–37 (TIEVTAKAG), 65–73 (TAQSVSVVT), 91–99 (YTPGVFTGF), 106–114 (YDTVALRGF), 137–145 (NVLQVDPWF), 152–160 (IKGPSSALY), 180–188 (SEGHFRLTA), 194–202 (QVAAFDYTD), 208–216 (WAFRLTGIT), 259–267 (GGYHSAVPA), 271–279 (IYGQKLSRG), 293–301 (WQQIYSYEF), 309–317 (WSFRQNASY), 353–361 (FAVDNQLEA), 370–378 (HKVLLGVDF), 427–435 (YEQSGVYLQ), 443–451 (WHLNLSGRY), 476–484 (GRASLLYSF), 491–499 (YVSYSQAIT), 517–525 (EQYEVGIIY), 531–539 (TSLYSAALY), 555–563 (YYVPAGKVN), 567–575 (LELEARSQI), 579–587 (LSVIAGYTY), 610–618 (NMASLWAQY), 624–632 (INVGAGIRY), 649–657 (YTLGDASVR), 671–679 (FVQLNVNNI), 684–692 (YVAACYSTS), and 702–710 (VQATVGYDF). The TBDR plug domain maps to 61 to 174 (PLILTAQSVS…PGGVVMMTSK (114 aa)). The TBDR beta-barrel domain maps to 181-710 (EGHFRLTAGN…SVQATVGYDF (530 aa)). Positions 693-710 (YCYWGAERSVQATVGYDF) match the TonB C-terminal box motif.

It belongs to the TonB-dependent receptor family.

The protein resides in the cell outer membrane. Ferrioxamine binding and uptake, in association with the TonB protein. The chain is Ferrioxamine receptor (foxA) from Yersinia enterocolitica.